The primary structure comprises 279 residues: Pantothenate synthetase (279 aa).

27-34 (MGYLHEGH) contacts ATP. Residue His-34 is the Proton donor of the active site. Gln-58 contributes to the (R)-pantoate binding site. Gln-58 serves as a coordination point for beta-alanine. 144–147 (GKKD) contacts ATP. Gln-150 is a binding site for (R)-pantoate. Residues Val-173 and 181 to 184 (MSSR) each bind ATP.

The protein belongs to the pantothenate synthetase family. Homodimer.

The protein resides in the cytoplasm. It carries out the reaction (R)-pantoate + beta-alanine + ATP = (R)-pantothenate + AMP + diphosphate + H(+). It functions in the pathway cofactor biosynthesis; (R)-pantothenate biosynthesis; (R)-pantothenate from (R)-pantoate and beta-alanine: step 1/1. In terms of biological role, catalyzes the condensation of pantoate with beta-alanine in an ATP-dependent reaction via a pantoyl-adenylate intermediate. The protein is Pantothenate synthetase of Citrifermentans bemidjiense (strain ATCC BAA-1014 / DSM 16622 / JCM 12645 / Bem) (Geobacter bemidjiensis).